Reading from the N-terminus, the 203-residue chain is SPbeta prophage-derived uncharacterized lipoprotein YonS (203 aa).

Positions 1–21 (MKLFKKLGILLLITSLILLAA) are cleaved as a signal peptide. Cys-22 carries N-palmitoyl cysteine lipidation. Cys-22 carries S-diacylglycerol cysteine lipidation. Positions 27–46 (ESSSSSEDTNNATDTNTSES) are enriched in low complexity. Residues 27–57 (ESSSSSEDTNNATDTNTSESQDISVNGPEKV) form a disordered region.

It is found in the cell membrane. In Bacillus subtilis (strain 168), this protein is SPbeta prophage-derived uncharacterized lipoprotein YonS (yonS).